A 390-amino-acid polypeptide reads, in one-letter code: Pyruvate dehydrogenase E1 component subunit alpha, somatic form, mitochondrial (390 aa).

Residues 1 to 29 (MRKMLAAVSRVLSGVAQKPASRVLVASRH) constitute a mitochondrion transit peptide. At K63 the chain carries N6-acetyllysine; alternate. K63 bears the N6-succinyllysine; alternate mark. 11 residues coordinate pyruvate: H92, Y118, R119, A157, G165, V167, D196, G197, A198, N225, and Y227. Residues Y118 and R119 each contribute to the thiamine diphosphate site. The thiamine diphosphate site is built by G165, V167, D196, G197, A198, and N225. D196 provides a ligand contact to Mg(2+). N225 and Y227 together coordinate Mg(2+). S232 carries the post-translational modification Phosphoserine; by PDK1. Position 244 is an N6-acetyllysine; alternate (K244). K244 is subject to N6-succinyllysine; alternate. K267 carries the post-translational modification N6-acetyllysine. Position 277 is an N6-succinyllysine (K277). H292 contacts thiamine diphosphate. Residue S293 is modified to Phosphoserine; by PDK1, PDK2, PDK3 and PDK4. The residue at position 295 (S295) is a Phosphoserine. A Phosphoserine; by PDK1, PDK2, PDK3 and PDK4 modification is found at S300. Y301 bears the Phosphotyrosine mark. Position 313 is an N6-acetyllysine; alternate (K313). K313 bears the N6-succinyllysine; alternate mark. An N6-acetyllysine mark is found at K321 and K336. At K385 the chain carries N6-succinyllysine.

Heterotetramer of two PDHA1 and two PDHB subunits. The heterotetramer interacts with DLAT, and is part of the multimeric pyruvate dehydrogenase complex that contains multiple copies of pyruvate dehydrogenase (E1), dihydrolipoamide acetyltransferase (DLAT, E2) and lipoamide dehydrogenase (DLD, E3). These subunits are bound to an inner core composed of about 48 DLAT and 12 PDHX molecules. Requires thiamine diphosphate as cofactor. It depends on Mg(2+) as a cofactor. Phosphorylation at Ser-232, Ser-293 and Ser-300 by PDK family kinases inactivates the enzyme; for this phosphorylation at a single site is sufficient. Phosphorylation at Ser-293 interferes with access to active site, and thereby inactivates the enzyme. Dephosphorylation at all three sites, i.e. at Ser-232, Ser-293 and Ser-300, is required for reactivation. In terms of processing, acetylation alters the phosphorylation pattern. Deacetylated by SIRT3.

It localises to the mitochondrion matrix. The enzyme catalyses N(6)-[(R)-lipoyl]-L-lysyl-[protein] + pyruvate + H(+) = N(6)-[(R)-S(8)-acetyldihydrolipoyl]-L-lysyl-[protein] + CO2. With respect to regulation, pyruvate dehydrogenase activity is inhibited by phosphorylation of PDHA1; it is reactivated by dephosphorylation. Functionally, the pyruvate dehydrogenase complex catalyzes the overall conversion of pyruvate to acetyl-CoA and CO(2), and thereby links the glycolytic pathway to the tricarboxylic cycle. The protein is Pyruvate dehydrogenase E1 component subunit alpha, somatic form, mitochondrial (PDHA1) of Bos taurus (Bovine).